We begin with the raw amino-acid sequence, 107 residues long: UPF0473 protein Ldb1604 (107 aa).

The protein belongs to the UPF0473 family.

This Lactobacillus delbrueckii subsp. bulgaricus (strain ATCC 11842 / DSM 20081 / BCRC 10696 / JCM 1002 / NBRC 13953 / NCIMB 11778 / NCTC 12712 / WDCM 00102 / Lb 14) protein is UPF0473 protein Ldb1604.